Here is a 334-residue protein sequence, read N- to C-terminus: Thioredoxin reductase aclT (334 aa).

Residues 16-19 (GGPA), 38-43 (NASIDR), I93, A122, D294, and 302-303 (TL) contribute to the FAD site.

The protein belongs to the class-II pyridine nucleotide-disulfide oxidoreductase family. Homodimer. Requires FAD as cofactor.

The protein operates within mycotoxin biosynthesis. In terms of biological role, thioredoxin reductase; part of the gene cluster that mediates the biosynthesis of aspirochlorine (or antibiotic A30641), an unusual halogenated spiro compound with distinctive antifungal properties due to selective inhibition of protein biosynthesis, and which is also active against bacteria, viruses, and murine tumor cells. The non-ribosomal peptide synthetase (NRPS) aclP is responsible the formation of the diketopiperazine (DKP) core from the condensation of 2 phenylalanine residues. One Phe residue is tailored into chlorotyrosine by hydroxylation and chlorination, whereas the second Phe undergoes an unprecedented C-C bond cleavage to be converted into glycine. After formation of the DKP, sulfur is incorporated into the DKP by conjugation with glutathione by aclG, followed by its stepwise degradation to the thiol by aclI, aclJ and aclK, and the dithiol oxidation by aclT. In addition, oxygenases (aclB, aclC, aclL and aclO) and O-methyltransferases (aclM and aclU) act as tailoring enzymes to produce the intermediate dechloroaspirochlorine. Ultimately, chlorination of dechloroaspirochlorine by the halogenase aclH is the last step in the aspirochlorine pathway. In Aspergillus oryzae (strain ATCC 42149 / RIB 40) (Yellow koji mold), this protein is Thioredoxin reductase aclT.